Reading from the N-terminus, the 110-residue chain is MVYIDHNGRVWEKRPWDWRRIVELFVGIWFAIKQLFLTFLAPFTGNNNQANPRRGNGWGGGGGWGGGGGGGGGGGGGRPGSGSGGLRPNRRIGRIQPTMSCNMPAGGGUG.

Residues 1 to 20 (MVYIDHNGRVWEKRPWDWRR) lie on the Lumenal side of the membrane. The helical; Signal-anchor for type III membrane protein transmembrane segment at 21–41 (IVELFVGIWFAIKQLFLTFLA) threads the bilayer. Residues 42-110 (PFTGNNNQAN…CNMPAGGGUG (69 aa)) are Cytoplasmic-facing. Residues 51 to 110 (NPRRGNGWGGGGGWGGGGGGGGGGGGGRPGSGSGGLRPNRRIGRIQPTMSCNMPAGGGUG) form a disordered region. Residues 56–85 (NGWGGGGGWGGGGGGGGGGGGGRPGSGSGG) show a composition bias toward gly residues. Position 109 (selenocysteine 109) is a non-standard amino acid, selenocysteine.

It is found in the golgi apparatus membrane. Its function is as follows. Plays a role in the life span. May be involved in regulating the redox state of the cell and possesses anticarcinogenic properties. This Drosophila melanogaster (Fruit fly) protein is Glycine-rich selenoprotein (SelG).